A 382-amino-acid polypeptide reads, in one-letter code: Chaperone protein DnaJ (382 aa).

Residues 5 to 70 (DYYEVLGVSR…DKKAAYDRYG (66 aa)) enclose the J domain. Residues 141–219 (GVQKTINVPA…CHGAGRVEKE (79 aa)) form a CR-type zinc finger. Positions 154, 157, 171, 174, 193, 196, 207, and 210 each coordinate Zn(2+). 4 CXXCXGXG motif repeats span residues 154–161 (CDACKGTG), 171–178 (CPTCSGMG), 193–200 (CPTCNGMG), and 207–214 (CKVCHGAG).

It belongs to the DnaJ family. In terms of assembly, homodimer. Requires Zn(2+) as cofactor.

The protein localises to the cytoplasm. Its function is as follows. Participates actively in the response to hyperosmotic and heat shock by preventing the aggregation of stress-denatured proteins and by disaggregating proteins, also in an autonomous, DnaK-independent fashion. Unfolded proteins bind initially to DnaJ; upon interaction with the DnaJ-bound protein, DnaK hydrolyzes its bound ATP, resulting in the formation of a stable complex. GrpE releases ADP from DnaK; ATP binding to DnaK triggers the release of the substrate protein, thus completing the reaction cycle. Several rounds of ATP-dependent interactions between DnaJ, DnaK and GrpE are required for fully efficient folding. Also involved, together with DnaK and GrpE, in the DNA replication of plasmids through activation of initiation proteins. The sequence is that of Chaperone protein DnaJ from Cereibacter sphaeroides (strain ATCC 17023 / DSM 158 / JCM 6121 / CCUG 31486 / LMG 2827 / NBRC 12203 / NCIMB 8253 / ATH 2.4.1.) (Rhodobacter sphaeroides).